A 289-amino-acid polypeptide reads, in one-letter code: Thiosulfate sulfurtransferase (289 aa).

Positions 24 to 142 (VGAGLRVLDA…WVKEGHPVTA (119 aa)) constitute a Rhodanese 1 domain. Positions 143–158 (EPSQPAEAVFKAKLDK) are hinge. Residues 172–284 (GSKKFQVVDS…WFHRAPPQYK (113 aa)) form the Rhodanese 2 domain. Position 186 (R186) interacts with substrate. Catalysis depends on C244, which acts as the Cysteine persulfide intermediate. K246 serves as a coordination point for substrate.

In terms of assembly, monomer. As to expression, expressed in numerous tissues.

It is found in the mitochondrion matrix. It catalyses the reaction thiosulfate + hydrogen cyanide = thiocyanate + sulfite + 2 H(+). Its function is as follows. Together with MRPL18, acts as a mitochondrial import factor for the cytosolic 5S rRNA. Only the nascent unfolded cytoplasmic form is able to bind to the 5S rRNA. Formation of iron-sulfur complexes and cyanide detoxification. The sequence is that of Thiosulfate sulfurtransferase (TST) from Gallus gallus (Chicken).